Reading from the N-terminus, the 191-residue chain is Small ribosomal subunit protein bS6 (191 aa).

The disordered stretch occupies residues 168–191; sequence KVNLTRKPTPNKSSENKQKVEKQA. Over residues 181–191 the composition is skewed to basic and acidic residues; the sequence is SENKQKVEKQA.

This sequence belongs to the bacterial ribosomal protein bS6 family.

Its function is as follows. Binds together with bS18 to 16S ribosomal RNA. The polypeptide is Small ribosomal subunit protein bS6 (Mycoplasmoides gallisepticum (strain R(low / passage 15 / clone 2)) (Mycoplasma gallisepticum)).